A 368-amino-acid chain; its full sequence is Protein-glutamate methylesterase/protein-glutamine glutaminase 2 (368 aa).

One can recognise a Response regulatory domain in the interval 6-123 (KVLLVDDSAV…KEYLESAAGE (118 aa)). Position 57 is a 4-aspartylphosphate (Asp57). A CheB-type methylesterase domain is found at 169–355 (IAGANKIAAL…SLERIPQCVL (187 aa)). Residues Ser181, His207, and Asp303 contribute to the active site.

It belongs to the CheB family. In terms of processing, phosphorylated by CheA. Phosphorylation of the N-terminal regulatory domain activates the methylesterase activity.

The protein resides in the cytoplasm. The enzyme catalyses [protein]-L-glutamate 5-O-methyl ester + H2O = L-glutamyl-[protein] + methanol + H(+). It catalyses the reaction L-glutaminyl-[protein] + H2O = L-glutamyl-[protein] + NH4(+). Involved in chemotaxis. Part of a chemotaxis signal transduction system that modulates chemotaxis in response to various stimuli. Catalyzes the demethylation of specific methylglutamate residues introduced into the chemoreceptors (methyl-accepting chemotaxis proteins or MCP) by CheR. Also mediates the irreversible deamidation of specific glutamine residues to glutamic acid. The chain is Protein-glutamate methylesterase/protein-glutamine glutaminase 2 from Hahella chejuensis (strain KCTC 2396).